A 198-amino-acid polypeptide reads, in one-letter code: Glycerol-3-phosphate acyltransferase (198 aa).

The next 5 membrane-spanning stretches (helical) occupy residues 5 to 25 (LILL…LWIG), 56 to 76 (SIVT…PFFF), 84 to 104 (FWLL…FAGF), 114 to 134 (AGVI…VFLV), and 158 to 178 (LFMG…FVIW).

Belongs to the PlsY family. As to quaternary structure, probably interacts with PlsX.

It localises to the cell membrane. The catalysed reaction is an acyl phosphate + sn-glycerol 3-phosphate = a 1-acyl-sn-glycero-3-phosphate + phosphate. It participates in lipid metabolism; phospholipid metabolism. Functionally, catalyzes the transfer of an acyl group from acyl-phosphate (acyl-PO(4)) to glycerol-3-phosphate (G3P) to form lysophosphatidic acid (LPA). This enzyme utilizes acyl-phosphate as fatty acyl donor, but not acyl-CoA or acyl-ACP. The chain is Glycerol-3-phosphate acyltransferase from Listeria monocytogenes serovar 1/2a (strain ATCC BAA-679 / EGD-e).